A 691-amino-acid polypeptide reads, in one-letter code: DNA ligase (691 aa).

NAD(+) contacts are provided by residues 41-45 (DAEFD), 91-92 (SL), and glutamate 121. The active-site N6-AMP-lysine intermediate is lysine 123. The NAD(+) site is built by arginine 144, glutamate 184, lysine 300, and lysine 324. 4 residues coordinate Zn(2+): cysteine 418, cysteine 421, cysteine 437, and cysteine 443. The region spanning 607 to 691 (SVPRTLAGLT…LLADGPASRT (85 aa)) is the BRCT domain.

It belongs to the NAD-dependent DNA ligase family. LigA subfamily. Mg(2+) serves as cofactor. Requires Mn(2+) as cofactor.

The catalysed reaction is NAD(+) + (deoxyribonucleotide)n-3'-hydroxyl + 5'-phospho-(deoxyribonucleotide)m = (deoxyribonucleotide)n+m + AMP + beta-nicotinamide D-nucleotide.. Functionally, DNA ligase that catalyzes the formation of phosphodiester linkages between 5'-phosphoryl and 3'-hydroxyl groups in double-stranded DNA using NAD as a coenzyme and as the energy source for the reaction. It is essential for DNA replication and repair of damaged DNA. This chain is DNA ligase, found in Mycobacterium tuberculosis (strain ATCC 25177 / H37Ra).